A 286-amino-acid chain; its full sequence is Formamidopyrimidine-DNA glycosylase (286 aa).

The active-site Schiff-base intermediate with DNA is the proline 2. Residue glutamate 3 is the Proton donor of the active site. The active-site Proton donor; for beta-elimination activity is the lysine 61. Residues histidine 103, arginine 122, and arginine 164 each contribute to the DNA site. Residues 250–284 (NAYGQTGEPCGRCGTQIVRENFMNRGSHYCPNCQK) form an FPG-type zinc finger. The Proton donor; for delta-elimination activity role is filled by arginine 274.

It belongs to the FPG family. In terms of assembly, monomer. Zn(2+) is required as a cofactor.

The enzyme catalyses Hydrolysis of DNA containing ring-opened 7-methylguanine residues, releasing 2,6-diamino-4-hydroxy-5-(N-methyl)formamidopyrimidine.. It carries out the reaction 2'-deoxyribonucleotide-(2'-deoxyribose 5'-phosphate)-2'-deoxyribonucleotide-DNA = a 3'-end 2'-deoxyribonucleotide-(2,3-dehydro-2,3-deoxyribose 5'-phosphate)-DNA + a 5'-end 5'-phospho-2'-deoxyribonucleoside-DNA + H(+). Involved in base excision repair of DNA damaged by oxidation or by mutagenic agents. Acts as a DNA glycosylase that recognizes and removes damaged bases. Has a preference for oxidized purines, such as 7,8-dihydro-8-oxoguanine (8-oxoG). Has AP (apurinic/apyrimidinic) lyase activity and introduces nicks in the DNA strand. Cleaves the DNA backbone by beta-delta elimination to generate a single-strand break at the site of the removed base with both 3'- and 5'-phosphates. The chain is Formamidopyrimidine-DNA glycosylase from Corynebacterium glutamicum (strain R).